A 656-amino-acid polypeptide reads, in one-letter code: MQTTSDVLIIGGGIIGLAIAVELKLKQKRLQVTVLSRDFAQAASHAAAGMLAPHAEQIAPGPMLDLCLASRWRYGEWVEKLEQLTGMETGYNPCGILSPVFEAPHGNSSTNSAWLDQETIRYYQPGLGEDVIGGWWHPDDGQVDNRKLVSALRQAAQSLGVQIQEGVTVQAIAQRHGQVTAVLTDQGSFQADSYVLANGSWAKELLPLPVFPVKGQMMALRMPAGTHQPYPLQRVLFGPQTYLVPRRDGRLIVGATSEQVDWQPHNTPQGIQTLLGRAIRLFPALGDWAIEDFWWGFRPGTPDEQPFLGYGPCDNLILAIGHYRNGILLAPITAALISDLILDQKVSPLIHAFSPQRFLTTTNPPVLSCRPMTAVFPSIANPSLPHAAENSEGSKDLLEIAGRKFHSRLMTGTGKYPSLTTMQESVASSGCQIVTVAVRRVQTNAPGHEGLAEAIDWSTIWMLPNTAGCQTAEEAIRVARLGREMAKLLGQEDNNFIKLEVIPDTQYLLPDPIGTLEAAEQLVKEGFAVLPYINADPLLAKRLEEVGCATVMPLGSPIGSGQGIRNAANIGIIIENAKVPVVVDAGIGTPSEAAQAMEMGADAVLINSAIAMAANPVAMAQAMGMATQAGRLAYLSGRMPIKAKANASSPLTGLVG.

Residues 1-395 form a thiO region; sequence MQTTSDVLII…HAAENSEGSK (395 aa). Residues 7–21 and 48–50 contribute to the FAD site; these read VLII…AIAV and AGM. Position 56 (Glu56) interacts with glycine. Position 169 (Val169) interacts with FAD. Residues Arg298 and Arg324 each contribute to the glycine site. Position 322-328 (322-328) interacts with FAD; sequence HYRNGIL. The tract at residues 396–656 is thiG; the sequence is DLLEIAGRKF…ASSPLTGLVG (261 aa). Lys498 serves as the catalytic Schiff-base intermediate with DXP. 1-deoxy-D-xylulose 5-phosphate is bound by residues Gly559, 585–586, and 607–608; these read AG and NS.

In the N-terminal section; belongs to the DAO family. ThiO subfamily. It in the C-terminal section; belongs to the ThiG family. Interacts with ThiH and ThiS. FAD is required as a cofactor.

The protein resides in the cytoplasm. It carries out the reaction glycine + O2 + H2O = glyoxylate + H2O2 + NH4(+). It catalyses the reaction [ThiS sulfur-carrier protein]-C-terminal-Gly-aminoethanethioate + 2-iminoacetate + 1-deoxy-D-xylulose 5-phosphate = [ThiS sulfur-carrier protein]-C-terminal Gly-Gly + 2-[(2R,5Z)-2-carboxy-4-methylthiazol-5(2H)-ylidene]ethyl phosphate + 2 H2O + H(+). Its pathway is cofactor biosynthesis; thiamine diphosphate biosynthesis. In terms of biological role, catalyzes the FAD-dependent oxidative deamination of glycine. Is essential for thiamine biosynthesis since the oxidation of glycine catalyzed by ThiO generates the glycine imine intermediate (dehydroglycine) required for the biosynthesis of the thiazole ring of thiamine pyrophosphate. Catalyzes the rearrangement of 1-deoxy-D-xylulose 5-phosphate (DXP) to produce the thiazole phosphate moiety of thiamine. Sulfur is provided by the thiocarboxylate moiety of the carrier protein ThiS. In vitro, sulfur can be provided by H(2)S. The chain is Bifunctional protein ThiO/ThiG (thiO/thiG) from Synechocystis sp. (strain ATCC 27184 / PCC 6803 / Kazusa).